Here is a 341-residue protein sequence, read N- to C-terminus: Coiled-coil domain-containing protein 86 (341 aa).

Residues 1 to 341 (MGTPLRRSRR…QPPQRPVAKV (341 aa)) form a disordered region. Ser18 carries the post-translational modification Phosphoserine. The span at 26-49 (EVSRAKRALVDFKSNPEETRELES) shows a compositional bias: basic and acidic residues. Position 59 is a phosphoserine (Ser59). A compositionally biased stretch (low complexity) spans 64–73 (PETSPESPCP). Thr66 is subject to Phosphothreonine. A phosphoserine mark is found at Ser67, Ser70, Ser81, Ser92, Ser103, Ser114, and Ser124. Over residues 105–114 (AGQTESNPES) the composition is skewed to polar residues. Basic and acidic residues predominate over residues 130-139 (EVAHAKEEVI). 4 positions are modified to phosphoserine: Ser142, Ser169, Ser170, and Ser200. Basic residues predominate over residues 219 to 235 (GKPKSGRVWKDRSKKRF). Basic and acidic residues predominate over residues 254-298 (ERQERKLAKDFARHLEEEKQRRRQEKKERRAENLRRRLENERKAE). The stretch at 261 to 304 (AKDFARHLEEEKQRRRQEKKERRAENLRRRLENERKAEIVQVIR) forms a coiled coil. Residues 307-317 (AKLKKAKKKQL) are compositionally biased toward basic residues. A Citrulline modification is found at Arg323.

Citrullinated by PADI4.

The protein localises to the nucleus. It is found in the chromosome. It localises to the nucleolus. Required for proper chromosome segregation during mitosis and error-free mitotic progression. This chain is Coiled-coil domain-containing protein 86, found in Rattus norvegicus (Rat).